The sequence spans 810 residues: Protein kinase C-binding protein NELL1 (810 aa).

The first 21 residues, Met1–Gly21, serve as a signal peptide directing secretion. Asn40, Asn53, Asn83, Asn224, Asn294, and Asn372 each carry an N-linked (GlcNAc...) asparagine glycan. Positions Ala57–Cys227 constitute a Laminin G-like domain. A VWFC 1 domain is found at Lys271–Arg332. Cystine bridges form between Cys395–Cys407, Cys401–Cys416, and Cys418–Cys432. The Ca(2+) site is built by Asp434, Ile435, and Glu437. Residues Asp434–Thr475 form the EGF-like 1; calcium-binding domain. 15 disulfides stabilise this stretch: Cys438-Cys451, Cys445-Cys460, Cys462-Cys474, Cys480-Cys493, Cys487-Cys502, Cys504-Cys515, Cys519-Cys529, Cys523-Cys535, Cys537-Cys546, Cys553-Cys566, Cys560-Cys575, Cys577-Cys594, Cys600-Cys613, Cys607-Cys622, and Cys624-Cys630. Residues Asn453, Leu454, and Leu457 each coordinate Ca(2+). In terms of domain architecture, EGF-like 2; calcium-binding spans Glu476 to Lys516. A glycan (N-linked (GlcNAc...) asparagine) is linked at Asn511. Residues Ala517–Glu547 form the EGF-like 3 domain. The 39-residue stretch at Asp549–Tyr587 folds into the EGF-like 4; calcium-binding domain. Asn562 carries an N-linked (GlcNAc...) asparagine glycan. An EGF-like 5; calcium-binding domain is found at Asp596 to Ser631. An N-linked (GlcNAc...) asparagine glycan is attached at Asn609. VWFC domains are found at residues Gly632–Asp687 and Ser692–Val750. Asn708 carries N-linked (GlcNAc...) asparagine glycosylation.

In terms of assembly, interacts with ATRAID; the interaction promotes osteoblast cell differentiation and mineralization. Homotrimer. Binds to PKC beta-1. Interacts with ROBO3.

The protein localises to the cytoplasm. It localises to the nucleus envelope. The protein resides in the secreted. Plays a role in the control of cell growth and differentiation. Promotes osteoblast cell differentiation and terminal mineralization. In Rattus norvegicus (Rat), this protein is Protein kinase C-binding protein NELL1 (Nell1).